The sequence spans 155 residues: FHA domain-containing protein FhaB (155 aa).

A helical transmembrane segment spans residues 6 to 28; the sequence is LQLTRVGFLLLLWLFIWSVLRIL. Thr-36 carries the phosphothreonine modification. The FHA domain occupies 83-132; that stretch reads VLIGRADDSTLVLTDDYASTRHARLSPRGSEWYVEDLGSTNGTYLDRAKV.

In terms of processing, phosphorylated by PknB. Dephosphorylated by PstP.

Its subcellular location is the cell membrane. The protein is FHA domain-containing protein FhaB (fhaB) of Mycolicibacterium smegmatis (strain ATCC 700084 / mc(2)155) (Mycobacterium smegmatis).